Here is a 295-residue protein sequence, read N- to C-terminus: Pyridoxal 5'-phosphate synthase subunit PdxS (295 aa).

Residue Asp-25 coordinates D-ribose 5-phosphate. The Schiff-base intermediate with D-ribose 5-phosphate role is filled by Lys-82. Residue Gly-154 participates in D-ribose 5-phosphate binding. Arg-166 serves as a coordination point for D-glyceraldehyde 3-phosphate. D-ribose 5-phosphate is bound by residues Gly-215 and 236-237; that span reads GS.

It belongs to the PdxS/SNZ family. In the presence of PdxT, forms a dodecamer of heterodimers.

It carries out the reaction aldehydo-D-ribose 5-phosphate + D-glyceraldehyde 3-phosphate + L-glutamine = pyridoxal 5'-phosphate + L-glutamate + phosphate + 3 H2O + H(+). Its pathway is cofactor biosynthesis; pyridoxal 5'-phosphate biosynthesis. Functionally, catalyzes the formation of pyridoxal 5'-phosphate from ribose 5-phosphate (RBP), glyceraldehyde 3-phosphate (G3P) and ammonia. The ammonia is provided by the PdxT subunit. Can also use ribulose 5-phosphate and dihydroxyacetone phosphate as substrates, resulting from enzyme-catalyzed isomerization of RBP and G3P, respectively. In Bacillus cytotoxicus (strain DSM 22905 / CIP 110041 / 391-98 / NVH 391-98), this protein is Pyridoxal 5'-phosphate synthase subunit PdxS.